A 461-amino-acid chain; its full sequence is Elongation factor 1-alpha, oocyte form (461 aa).

Glycine 2 is subject to N,N,N-trimethylglycine. The tr-type G domain occupies 5-242 (KIHINIVVIG…DCIIPPQRPT (238 aa)). Residues 14-21 (GHVDSGKS) are G1. 14–21 (GHVDSGKS) contacts GTP. A G2 region spans residues 70–74 (GITID). The tract at residues 91–94 (DAPG) is G3. Residues 91-95 (DAPGH) and 153-156 (NKMD) contribute to the GTP site. A G4 region spans residues 153 to 156 (NKMD). Residues 194–196 (SGW) are G5. Glutamate 301 and glutamate 374 each carry 5-glutamyl glycerylphosphorylethanolamine.

Belongs to the TRAFAC class translation factor GTPase superfamily. Classic translation factor GTPase family. EF-Tu/EF-1A subfamily. Oocyte.

It localises to the cytoplasm. Its function is as follows. This protein promotes the GTP-dependent binding of aminoacyl-tRNA to the A-site of ribosomes during protein biosynthesis. This chain is Elongation factor 1-alpha, oocyte form, found in Xenopus laevis (African clawed frog).